Reading from the N-terminus, the 740-residue chain is MSENHDAIVTDAKTEETDGCPVAHGRAPHPTQGGGNRQWWPERLNLKILAKNPAVANPLGEEFDYAEAFEALDLAAVKRDIAEVLTTSQDWWPADFGNYGPLMIRMAWHSAGTYRISDGRGGAGAGQQRFAPLNSWPDNGNLDKARRLLWPVKKKYGQNLSWADLLVLTGNVALETMGFETFGFAGGRADVWEAEEDVYWGPETTWLDDRRYTGDRELENPLGAVQMGLIYVNPEGPNGNPDPIAAARDIRETFRRMAMNDEETVALIAGGHTFGKTHGAGPADAVGDDPEAAAMEQQGLGWKSTHGTGKGGDAITSGLEVTWTSTPTQWGNGFFKNLFEFEYELEQSPAGANQWVAKDAPEIIPDAHDPAKKHRPRMLTTDLSLRLDPIYGPISRRFYENPEEFADAFARAWFKLTHRDMGPKSLYLGPEVPEETLIWQDPLPEPEGEVIDAEDVATLKTKLLESGLSVSQLVTTAWASASTFRGSDKRGGANGARIRLEPQRGWEVNEPDELAQVLRVLEGVQREFNSGSGAKKVSLADLIVLGGSAAVEKAAKEAGFPVEVPFAAGRVDATEEHTDAESFEALEPTADGFRNYLGKGNRLPAEFLLLDRANLLTLSAPEMTVLVGGLRVLGAGHQQSQLGVFTRTPGSLTNDFFVNLLDLGTTWKSTSEDRTTFEGRDAATGEVKWAGSRADLVFGSNAELRALAEVYASDDAGEKFVHDFVAAWVKVMNLDRFDLA.

The segment covering 1–16 (MSENHDAIVTDAKTEE) has biased composition (basic and acidic residues). Residues 1–38 (MSENHDAIVTDAKTEETDGCPVAHGRAPHPTQGGGNRQ) form a disordered region. The tryptophyl-tyrosyl-methioninium (Trp-Tyr) (with M-257) cross-link spans 108–231 (WHSAGTYRIS…LGAVQMGLIY (124 aa)). The active-site Proton acceptor is His109. The tryptophyl-tyrosyl-methioninium (Tyr-Met) (with W-108) cross-link spans 231-257 (YVNPEGPNGNPDPIAAARDIRETFRRM). His272 contributes to the heme b binding site.

It belongs to the peroxidase family. Peroxidase/catalase subfamily. As to quaternary structure, homodimer. It depends on heme b as a cofactor. In terms of processing, formation of the three residue Trp-Tyr-Met cross-link is important for the catalase, but not the peroxidase activity of the enzyme.

It catalyses the reaction H2O2 + AH2 = A + 2 H2O. The enzyme catalyses 2 H2O2 = O2 + 2 H2O. Functionally, bifunctional enzyme with both catalase and broad-spectrum peroxidase activity. The sequence is that of Catalase-peroxidase from Streptomyces coelicolor (strain ATCC BAA-471 / A3(2) / M145).